Consider the following 452-residue polypeptide: Tylactone mycaminosyltransferase (452 aa).

A compositionally biased stretch (basic and acidic residues) spans 1-16; it reads MRRALDDRRRGPHGPE. The interval 1 to 20 is disordered; it reads MRRALDDRRRGPHGPEGKPP.

The protein belongs to the glycosyltransferase 28 family.

The catalysed reaction is tylactone + dTDP-alpha-D-mycaminose = 5-O-beta-D-mycaminosyltylactone + dTDP + H(+). It participates in antibiotic biosynthesis; tylosin biosynthesis. The activity of TylM2 is substantially increased by the addition of the accessory protein TylM3. Involved in the biosynthesis of the macrolide antibiotic tylosin derived from the polyketide lactone tylactone. Catalyzes the transfer of alpha-D-mycaminosyl from dTDP-alpha-D-mycaminose to the 5-hydroxyl group of tylactone to yield 5-O-mycaminosytylactone. It can also accept 16-membered tylactone and 12-membered ring macrolide. The chain is Tylactone mycaminosyltransferase from Streptomyces fradiae (Streptomyces roseoflavus).